Here is a 3375-residue protein sequence, read N- to C-terminus: Basement membrane proteoglycan (3375 aa).

The first 22 residues, 1-22 (MKRSSTVLAALLALLLVATNDA), serve as a signal peptide directing secretion. Positions 45 to 130 (VQITVFPSEK…NTVEARATLS (86 aa)) constitute an Ig-like C2-type 1 domain. Intrachain disulfides connect Cys-66/Cys-114, Cys-149/Cys-161, Cys-156/Cys-174, Cys-168/Cys-183, Cys-190/Cys-202, Cys-197/Cys-215, Cys-209/Cys-224, Cys-233/Cys-246, Cys-240/Cys-259, Cys-253/Cys-268, and Cys-293/Cys-344. LDL-receptor class A domains are found at residues 148–184 (QCMADEKACGNNECVKNDYVCDGEPDCRDRSDEANCP), 189–225 (TCEPNEFKCNNNKCVQKMWLCDGDDDCGDNSDELNCN), and 232–269 (DCKPTEFQCHDRRQCVPSSFHCDGTNDCHDGSDEVGCV). The Ig-like C2-type 2 domain occupies 271-355 (PTVVDPPQTN…AINVKGRVLA (85 aa)). Residues 364–385 (VDDPRPQPPQPPTAPPQRASCD) form a disordered region. A compositionally biased stretch (pro residues) spans 369–378 (PQPPQPPTAP). 3 cysteine pairs are disulfide-bonded: Cys-384-Cys-400, Cys-402-Cys-411, and Cys-414-Cys-429. Positions 384–431 (CDTRGAVTPYPNNYGTCECKSQVTGPNCDQCKPGAFHLSEKSPEGCLK) constitute a Laminin EGF-like 1; truncated domain. Residues 432 to 441 (CFCFGVSNDC) form the Laminin EGF-like 2; first part domain. Positions 450–633 (KDRLMFAGDA…PDGLALEVEQ (184 aa)) constitute a Laminin IV type A 1 domain. Intrachain disulfides connect Cys-634-Cys-648, Cys-636-Cys-689, Cys-691-Cys-700, and Cys-703-Cys-718. The 33-residue stretch at 634-666 (CVCPPGYLGTSCEDCAPGYERSGYGPYLGTCVP) folds into the Laminin EGF-like 2; second part domain. The region spanning 674 to 720 (CGPGAVAPTAPAQGQCQCKASVIGPNCDRCAPNSFGLAPTNPQGCIP) is the Laminin EGF-like 3; truncated domain. One can recognise a Laminin EGF-like 4; first part domain in the interval 721–730 (CFCSGVTQQC). The region spanning 740–921 (VSIDYARGDR…QGLTAAEVEQ (182 aa)) is the Laminin IV type A 2 domain. The Laminin EGF-like 4; second part domain maps to 922–954 (CICPPGYVGTSCEDCAPGYSRTGGGLYLGLCEK). Cystine bridges form between Cys-955-Cys-964, Cys-957-Cys-971, Cys-974-Cys-983, Cys-986-Cys-1002, Cys-1011-Cys-1021, Cys-1013-Cys-1027, Cys-1030-Cys-1039, Cys-1042-Cys-1058, Cys-1061-Cys-1069, Cys-1063-Cys-1079, Cys-1082-Cys-1091, Cys-1094-Cys-1109, Cys-1152-Cys-1200, Cys-1247-Cys-1294, and Cys-1338-Cys-1384. 3 consecutive Laminin EGF-like domains span residues 955 to 1004 (CECN…DCQP), 1011 to 1060 (CHCN…DCTP), and 1061 to 1111 (CPCP…VCEP). Ig-like C2-type domains follow at residues 1126–1222 (PHEV…KRIS), 1226–1311 (PQPV…AVLE), 1319–1401 (PKVD…EPVQ), 1410–1499 (PQRG…ARLN), 1503–1585 (PQAI…RPVE), 1588–1680 (PARV…TPAT), 1690–1785 (PQVE…STLN), 1793–1878 (PRPV…VRLE), 1886–1970 (PTAV…GNVN), 1973–2069 (PSLT…IYIE), 2073–2163 (PSRI…AVHV), 2173–2260 (PKVE…TAVS), 2263–2343 (QQDK…GFVT), 2349–2435 (PDTI…RTVL), and 2446–2530 (TFTV…VDLQ). Residues 1388 to 1400 (DPSDNTPLQSEPV) show a composition bias toward polar residues. 2 disordered regions span residues 1388–1426 (DPSDNTPLQSEPVQLNIRDPAPPQRGAAPQIDPPNQTVN) and 1478–1497 (EYECTSTEPDGSTQLSPPAR). An N-linked (GlcNAc...) asparagine glycan is attached at Asn-1422. Cystine bridges form between Cys-1435–Cys-1481, Cys-1527–Cys-1573, Cys-1618–Cys-1663, and Cys-1719–Cys-1767. The segment covering 1481-1497 (CTSTEPDGSTQLSPPAR) has biased composition (polar residues). Positions 1773 to 1792 (NSPPVKTNPSTLNVTPEGTP) are disordered. Residues 1776–1788 (PVKTNPSTLNVTP) are compositionally biased toward polar residues. 15 disulfides stabilise this stretch: Cys-1814-Cys-1861, Cys-1907-Cys-1954, Cys-1998-Cys-2053, Cys-2099-Cys-2147, Cys-2195-Cys-2242, Cys-2284-Cys-2329, Cys-2374-Cys-2420, Cys-2467-Cys-2514, Cys-2713-Cys-2725, Cys-2719-Cys-2736, Cys-2738-Cys-2747, Cys-2754-Cys-2764, Cys-2759-Cys-2773, Cys-2775-Cys-2784, and Cys-2935-Cys-2960. Positions 1880-1918 (TEDQEPPTAVVEPRTWNGKPGERHQFRCITTGSPTPKIT) are disordered. The span at 1907–1918 (CITTGSPTPKIT) shows a compositional bias: polar residues. Residue Asn-2476 is glycosylated (N-linked (GlcNAc...) asparagine). The Laminin G-like 1 domain maps to 2532–2713 (DDFIPVIDGE…PSSVVKYDAC (182 aa)). The Laminin G-like 2 domain occupies 2793–2960 (PLGFTSDTSF…LSSSGDISSC (168 aa)). The N-linked (GlcNAc...) asparagine glycan is linked to Asn-2950. The span at 2952–2963 (SSSGDISSCEES) shows a compositional bias: low complexity. The tract at residues 2952–3124 (SSSGDISSCE…GTLPPDSSSE (173 aa)) is disordered. Acidic residues-rich tracts occupy residues 2979 to 2990 (EEPEAVIEEPTT) and 2999 to 3010 (PITEEPTEEPTT). A compositionally biased stretch (low complexity) spans 3011 to 3033 (TEEPTTTEEPTTTTEEPTTTTTE). Residues 3034–3044 (EPYHIYETSRD) show a composition bias toward basic and acidic residues. Over residues 3049–3079 (IIIPVETTTTSTTTTSTTEEPEAEPALVLPT) the composition is skewed to low complexity. Positions 3081–3094 (PVEENDVSDEEEEI) are enriched in acidic residues. 4 disulfide bridges follow: Cys-3141/Cys-3152, Cys-3146/Cys-3162, Cys-3164/Cys-3173, and Cys-3333/Cys-3359. N-linked (GlcNAc...) asparagine glycans are attached at residues Asn-3143 and Asn-3156. In terms of domain architecture, Laminin G-like 3 spans 3180–3359 (EHAARFDGDA…AIDGKNVKPC (180 aa)).

Component of an integrin containing attachment complex, composed of at least pat-2, pat-3, pat-4, pat-6, unc-52, unc-97 and unc-112. Detected on embryonic and adult body wall muscle cells (at protein level). Found in the basement membrane of all contractile tissues (at protein level). Expressed in gonadal sheath cells and spermatheca.

Its subcellular location is the secreted. It is found in the extracellular space. The protein localises to the extracellular matrix. It localises to the basement membrane. The protein resides in the cytoplasm. Its subcellular location is the myofibril. It is found in the sarcomere. The protein localises to the m line. Functionally, component of an integrin containing attachment complex, which is required for muscle development and maintenance. Probable structural role in myofilament assembly and/or attachment of the myofilament lattice to the cell membrane. May be an extracellular anchor for integrin receptors in body wall muscles and myoepithelial sheath cells. During the formation of neuromuscular junctions at the larval stage, negatively regulates membrane protrusion from body wall muscles, probably downstream of the integrin complex formed by pat-2 and pat-3. Involved in ovulation. Required for normal lifespan. This is Basement membrane proteoglycan from Caenorhabditis elegans.